The primary structure comprises 210 residues: MGISRDSIHKRRATGGKQKMWRKKRKYELGRQPANTKLSSNKTVRRIRVRGGNVKWRALRLDTGNFSWGSEAVTRKTRILDVAYNASNNELVRTQTLVKSAIVQVDAAPFKQGYLQHYGVDIGRKKKGEAVTTEEVKKSNHVQRKLEMRQEGRALDSHLEEQFSSGRLLACIASRPGQCGRADGYILEGKELEFYMKKLQKKKGKNAGAA.

Positions 1–22 (MGISRDSIHKRRATGGKQKMWR) are disordered. The span at 8 to 22 (IHKRRATGGKQKMWR) shows a compositional bias: basic residues.

Belongs to the eukaryotic ribosomal protein eS8 family.

The polypeptide is Small ribosomal subunit protein eS8y (RPS8B) (Arabidopsis thaliana (Mouse-ear cress)).